The primary structure comprises 331 residues: MQGTFRDFLKPRTVDIQEQGERRAKIVLEPLERGFGHTLGNALRRVLLSSMPGSAVVQAEIEGVEHEYSSMEGVQEDVVDILLNLKSLAVRMHDRDEAELTVSVQGPGPVTAGDIQTAHDVEVKNPELLICTLTKAVAFNAKLMVARGRGYEAATQRDGDEDRVIGRLQLDASYSPVKRVAYTVESARVEQRTNLDKLVLDVETNGVLEPEEAVRFAAGLLRDQLSVFVDLEGGEFEAEQEEQEPDVDPILLRPIDELELTVRSANCLKAESIHYVGDLVQRTEVELLKTPNLGKKSLTEIKETLASHGLSLGMRLENWPPAGLGEDRVVG.

An alpha N-terminal domain (alpha-NTD) region spans residues Met-1–Glu-232. An alpha C-terminal domain (alpha-CTD) region spans residues Val-247–Gly-331.

This sequence belongs to the RNA polymerase alpha chain family. As to quaternary structure, homodimer. The RNAP catalytic core consists of 2 alpha, 1 beta, 1 beta' and 1 omega subunit. When a sigma factor is associated with the core the holoenzyme is formed, which can initiate transcription.

It carries out the reaction RNA(n) + a ribonucleoside 5'-triphosphate = RNA(n+1) + diphosphate. DNA-dependent RNA polymerase catalyzes the transcription of DNA into RNA using the four ribonucleoside triphosphates as substrates. This Alkalilimnicola ehrlichii (strain ATCC BAA-1101 / DSM 17681 / MLHE-1) protein is DNA-directed RNA polymerase subunit alpha.